Reading from the N-terminus, the 394-residue chain is Probable fatty acid methyltransferase (394 aa).

S-adenosyl-L-methionine-binding positions include 128–129, 163–171, and 189–194; these read YS, LLDVGCGWG, and TLSKEQ. C358 is a catalytic residue.

It belongs to the CFA/CMAS family.

The polypeptide is Probable fatty acid methyltransferase (Pseudomonas putida (Arthrobacter siderocapsulatus)).